The chain runs to 36 residues: Mu/omega-theraphotoxin-Pmu1a (36 aa).

Disulfide bonds link C2–C16, C9–C21, and C15–C29.

Belongs to the neurotoxin 10 (Hwtx-1) family. Expressed by the venom gland.

The protein resides in the secreted. Gating-modifier toxin that targets both voltage-gated sodium and calcium channels, with described activities on human Nav1.7/SCN9A (IC(50)=5.5-7 nM), hNav1.6/SCN10A (IC(50)=9.9 nM), hNav1.4/SCN4A (IC(50)=62.9 nM), hCav3.2/CACNA1H (IC(50)=955.4 nM or 63.5% inhibition at 10 uM), hCav3.1/CACNA1G (95.1% inhibition at 10 uM), hCav3.3/CACNA1I (90.8% inhibition at 10 uM). Acts on Cav3 currents mainly by inducing a strong depolarizing shift in the current-voltage curve. This Pterinochilus murinus (Mombasa golden starburst baboon spider) protein is Mu/omega-theraphotoxin-Pmu1a.